We begin with the raw amino-acid sequence, 382 residues long: MSGYTVKPPTGDSNEQTQFIDYFNLFYSKRGQEQISISQQLGNYGATFFSASRQSYWNTSRSDQQISFGLNVPFGDITTSLNYSYSNNIWQNDRDHLLAFTLNVPFSHWMRTDSQSAFRNSNASYSMSNDLKGGMTNLSGVYGTLLPDNNLNYSVQVGNTHGGNTSSGTSGYSTLNYRGAYGNTNVGYSRSGDSSQIYYGMSGGIIAHADGITFGQPLGDTMVLVKAPGADNVKIENQTGIHTDWRGYAILPFATEYRENRVALNANSLADNVELDETVVTVIPTHGAIARATFNAQIGGKVLMTLKYGNKSVPFGAIVTHGENKNGSIVAENGQVYLTGLPQSGKLQVSWGNDKNSNCIVDYKLPEVSPGTLLNQQTAICR.

The polypeptide is Fimbrial usher domain-containing protein YdeT (ydeT) (Escherichia coli O157:H7).